The primary structure comprises 266 residues: Putative carbamate hydrolase RutD (266 aa).

Belongs to the AB hydrolase superfamily. Hydrolase RutD family.

The enzyme catalyses carbamate + 2 H(+) = NH4(+) + CO2. Its function is as follows. Involved in pyrimidine catabolism. May facilitate the hydrolysis of carbamate, a reaction that can also occur spontaneously. The sequence is that of Putative carbamate hydrolase RutD from Escherichia coli O7:K1 (strain IAI39 / ExPEC).